A 167-amino-acid chain; its full sequence is Protein MIX23 (167 aa).

The tract at residues 81–108 is disordered; it reads QLDQDRNTSKSPLKSQQQLPSSSTTQVS. The span at 89–106 shows a compositional bias: low complexity; that stretch reads SKSPLKSQQQLPSSSTTQ.

The protein belongs to the MIX23 family.

In Schizosaccharomyces pombe (strain 972 / ATCC 24843) (Fission yeast), this protein is Protein MIX23 (cid2).